A 275-amino-acid polypeptide reads, in one-letter code: Seminase (275 aa).

An N-terminal signal peptide occupies residues 1-19 (MKRLLFLFLLAGILINNHA). A glycan (N-linked (GlcNAc...) asparagine) is linked at asparagine 23. Residues 44 to 268 (VIGGRVTTNA…VKPFIVKGIK (225 aa)) enclose the Peptidase S1 domain. A disulfide bridge links cysteine 70 with cysteine 86. Catalysis depends on charge relay system residues histidine 85 and aspartate 131. 2 cysteine pairs are disulfide-bonded: cysteine 194–cysteine 210 and cysteine 220–cysteine 244. Serine 224 serves as the catalytic Charge relay system.

It belongs to the peptidase S1 family. Undergoes cleavage in the male during mating with a cleaved product detected in the ejaculatory duct and/or bulb of males by 8-10 minutes after the start of mating. Further cleavage occurs in the mated female. As to expression, produced in the male accessory glands and secreted into seminal fluid.

The protein resides in the secreted. In terms of biological role, seminal fluid protease which is required for cleavage and probably also activation of the metalloprotease Semp1. Also required for a number of female post-mating responses independent of Semp1 including egg laying and sperm usage. This is Seminase from Drosophila melanogaster (Fruit fly).